The following is a 353-amino-acid chain: O-antigen chain mannosyltransferase RfbU (353 aa).

This sequence belongs to the glycosyltransferase group 1 family. Glycosyltransferase 4 subfamily.

It carries out the reaction alpha-L-rhamnosyl-(1-&gt;3)-alpha-D-galactosyl-1-diphospho-di-trans,octa-cis-undecaprenol + GDP-alpha-D-mannose = alpha-D-Man-(1-&gt;4)-alpha-L-Rha-(1-&gt;3)-alpha-D-Gal-di-trans,octa-cis-undecaprenyl diphosphate + GDP + H(+). The protein operates within bacterial outer membrane biogenesis; LPS O-antigen biosynthesis. Functionally, mannosyltransferase involved in the biosynthesis of the repeat unit of the lipopolysaccharide (LPS) O-antigen region. Catalyzes the addition of a mannose to the rhamnosyl-galactosyl-undecaprenyl diphosphate intermediate. This chain is O-antigen chain mannosyltransferase RfbU, found in Salmonella typhimurium (strain LT2 / SGSC1412 / ATCC 700720).